Reading from the N-terminus, the 427-residue chain is FAD-dependent monooxygenase OpS4 (427 aa).

A signal peptide spans methionine 1–alanine 22. An FAD-binding site is contributed by glutamate 37. N-linked (GlcNAc...) asparagine glycosylation occurs at asparagine 54. FAD is bound by residues arginine 112, aspartate 306, and alanine 319.

The protein belongs to the paxM FAD-dependent monooxygenase family. FAD serves as cofactor.

It participates in secondary metabolite biosynthesis. In terms of biological role, FAD-dependent monooxygenase; part of the gene cluster that mediates the biosynthesis of the bibenzoquinone oosporein, a metabolite required for fungal virulence that acts by evading host immunity to facilitate fungal multiplication in insects. The non-reducing polyketide synthase OpS1 produces orsellinic acid by condensing acetyl-CoA with 3 malonyl-CoA units. Orsellinic acid is then hydroxylated to benzenetriol by the hydroxylase OpS4. The intermediate is oxidized either nonenzymatically to 5,5'-dideoxy-oosporein or enzymatically to benzenetetrol by the oxidoreductase OpS7. The latter is further dimerized to oosporein by the catalase OpS5. OpS6 probably functions en route for protecting cells against oxidative stress by scavenging any leaked free radical form of benzenetetrol by activating the thiol group of glutathione. This is FAD-dependent monooxygenase OpS4 from Beauveria bassiana (strain ARSEF 2860) (White muscardine disease fungus).